Here is a 190-residue protein sequence, read N- to C-terminus: Casparian strip membrane protein 1 (190 aa).

The Cytoplasmic portion of the chain corresponds to 1 to 24 (MKAESGSADAKLPLPPPVGRKRRG). Residues 25–45 (LAILDFLLRLLAIGATLSAAI) traverse the membrane as a helical segment. Residues 46-72 (AMGTNNETLKFFTQFFQFNARFYNLSA) are Extracellular-facing. N-linked (GlcNAc...) asparagine glycosylation is found at Asn51 and Asn69. Residues 73–93 (FIYFVIANATVGLYLLLSLPF) form a helical membrane-spanning segment. Residues 94 to 107 (SIFDIVRPRAAAFR) lie on the Cytoplasmic side of the membrane. Residues 108 to 128 (VLLIFFDTVMVAVCTSGAAAA) traverse the membrane as a helical segment. Residues 129–157 (TAIMYVARRGNTKTNWFSICQQFNSFCDQ) lie on the Extracellular side of the membrane. Residues 158 to 178 (ATGALGASFAAVVLLILLVLL) traverse the membrane as a helical segment. The Cytoplasmic segment spans residues 179-190 (SASTLHRQRADF).

The protein belongs to the Casparian strip membrane proteins (CASP) family. In terms of assembly, homodimer and heterodimers.

It localises to the cell membrane. Regulates membrane-cell wall junctions and localized cell wall deposition. Required for establishment of the Casparian strip membrane domain (CSD) and the subsequent formation of Casparian strips, a cell wall modification of the root endodermis that determines an apoplastic barrier between the intraorganismal apoplasm and the extraorganismal apoplasm and prevents lateral diffusion. This chain is Casparian strip membrane protein 1, found in Pinus taeda (Loblolly pine).